The primary structure comprises 97 residues: Acylphosphatase (97 aa).

An Acylphosphatase-like domain is found at 3 to 97 (KVKMIVSGRV…PDFTDFNIKY (95 aa)). Active-site residues include Arg18 and Asn36.

Belongs to the acylphosphatase family.

It catalyses the reaction an acyl phosphate + H2O = a carboxylate + phosphate + H(+). This chain is Acylphosphatase (acyP), found in Lactococcus lactis subsp. lactis (strain IL1403) (Streptococcus lactis).